The sequence spans 428 residues: Enolase (428 aa).

Gln-165 is a (2R)-2-phosphoglycerate binding site. The Proton donor role is filled by Glu-207. Asp-244, Glu-285, and Asp-312 together coordinate Mg(2+). Residues Lys-337, Arg-366, Ser-367, and Lys-388 each coordinate (2R)-2-phosphoglycerate. Catalysis depends on Lys-337, which acts as the Proton acceptor.

The protein belongs to the enolase family. In terms of assembly, component of the RNA degradosome, a multiprotein complex involved in RNA processing and mRNA degradation. The cofactor is Mg(2+).

It localises to the cytoplasm. It is found in the secreted. Its subcellular location is the cell surface. It catalyses the reaction (2R)-2-phosphoglycerate = phosphoenolpyruvate + H2O. Its pathway is carbohydrate degradation; glycolysis; pyruvate from D-glyceraldehyde 3-phosphate: step 4/5. Catalyzes the reversible conversion of 2-phosphoglycerate (2-PG) into phosphoenolpyruvate (PEP). It is essential for the degradation of carbohydrates via glycolysis. This chain is Enolase, found in Coxiella burnetii (strain Dugway 5J108-111).